A 230-amino-acid chain; its full sequence is Potassium/proton antiporter CemA (230 aa).

4 helical membrane passes run 7 to 27 (LPSL…SSSF), 107 to 127 (ILHF…FFLG), 145 to 165 (LNDS…VGFH), and 181 to 201 (FGWA…PVIL).

Belongs to the CemA family.

The protein resides in the plastid. Its subcellular location is the chloroplast inner membrane. The catalysed reaction is K(+)(in) + H(+)(out) = K(+)(out) + H(+)(in). Its function is as follows. Contributes to K(+)/H(+) antiport activity by supporting proton efflux to control proton extrusion and homeostasis in chloroplasts in a light-dependent manner to modulate photosynthesis. Prevents excessive induction of non-photochemical quenching (NPQ) under continuous-light conditions. Indirectly promotes efficient inorganic carbon uptake into chloroplasts. This is Potassium/proton antiporter CemA from Triticum aestivum (Wheat).